A 504-amino-acid chain; its full sequence is Kinesin light chain 3 (504 aa).

The stretch at 90–150 forms a coiled coil; the sequence is ALSAHVGALE…EEEKRHLEFL (61 aa). Residues 153–197 are disordered; that stretch reads LRQYDPPAESQQSESPPRRDSLASLFPSEEEERKGPEAAGAAAAQ. Residues 158–167 are compositionally biased toward low complexity; the sequence is PPAESQQSES. Ser173 is subject to Phosphoserine. TPR repeat units lie at residues 207–240, 249–282, 291–324, 333–366, and 375–408; these read LRTLHNLVIQYAGQGRYEVAVPLCRQALEDLERS, ATMLNILALVYRDQNKYKEATDLLHDALQIREQT, AATLNNLAVLYGKRGRYREAEPLCQRALEIREKV, AKQLNNLALLCQNQGKFEDVERHYARALSIYEAL, and AKTKNNLASAYLKQNKYQQAEELYKEILHKEDLP. Positions 411–438 are disordered; the sequence is LGAPNTGTAGDAEQALRRSSSLSKIRES. At Ser466 the chain carries Phosphoserine. The interval 472–504 is disordered; the sequence is VDAPRAPGTQFPSWHLDKAPRTLSASTQDLSPH. The segment covering 494–504 has biased composition (polar residues); the sequence is LSASTQDLSPH. Residue Thr498 is modified to Phosphothreonine. Residue Ser502 is modified to Phosphoserine.

Belongs to the kinesin light chain family. As to quaternary structure, oligomer composed of two heavy chains and two light chains. Associates with microtubulin in an ATP-dependent manner. Interacts with KIF5C. Interacts with ODF1. Interacts with LRGUK. Interacts with VDAC2.

Its subcellular location is the cytoplasm. It localises to the cytoskeleton. The protein localises to the mitochondrion. Functionally, kinesin is a microtubule-associated force-producing protein that may play a role in organelle transport. Plays a role during spermiogenesis in the development of the sperm tail midpiece and in the normal function of spermatozoa. May play a role in the formation of the mitochondrial sheath formation in the developing spermatid midpiece. The protein is Kinesin light chain 3 (KLC3) of Homo sapiens (Human).